The following is a 142-amino-acid chain: Mitochondrial import receptor subunit TOM22 homolog (142 aa).

Residues 1–18 (MAAAVAAAGAGEPLSPEE) show a composition bias toward low complexity. A disordered region spans residues 1–41 (MAAAVAAAGAGEPLSPEELLPKAEAEKAEEELEEDDDDELD). At Ala2 the chain carries N-acetylalanine. Topologically, residues 2–83 (AAAVAAAGAG…AQKMYRFSRA (82 aa)) are cytoplasmic. Ser15 bears the Phosphoserine mark. A compositionally biased stretch (acidic residues) spans 27-41 (KAEEELEEDDDDELD). Residues 41 to 50 (DETLSERLWG) form an import sequence; necessary for mitochondrion outer membrane localization and integration in the TOM complex region. The residue at position 43 (Thr43) is a Phosphothreonine. Phosphoserine is present on Ser45. Positions 83–103 (AALWIGTTSFMILVLPVVFET) are TMD; necessary for mitochondrion outer membrane localization and integration in the TOM complex. A helical transmembrane segment spans residues 84–103 (ALWIGTTSFMILVLPVVFET). Topologically, residues 104-142 (EKLQMEQQQQLQQRQILLGPNTGLSGGMPGALPPLPGKM) are mitochondrial intermembrane. The C-tail signal; necessary for mitochondrion outer membrane localization and integration in the TOM complex stretch occupies residues 123 to 142 (PNTGLSGGMPGALPPLPGKM).

Belongs to the Tom22 family. Forms part of the preprotein translocase complex of the outer mitochondrial membrane (TOM complex) which consists of at least 7 different proteins (TOMM5, TOMM6, TOMM7, TOMM20, TOMM22, TOMM40 and TOMM70). Interacts with PPP2R2B and TOMM40.

It is found in the mitochondrion outer membrane. Functionally, central receptor component of the translocase of the outer membrane of mitochondria (TOM complex) responsible for the recognition and translocation of cytosolically synthesized mitochondrial preproteins. Together with the peripheral receptor TOM20 functions as the transit peptide receptor and facilitates the movement of preproteins into the translocation pore. Required for the translocation across the mitochondrial outer membrane of cytochrome P450 monooxygenases. The polypeptide is Mitochondrial import receptor subunit TOM22 homolog (Tomm22) (Mus musculus (Mouse)).